The primary structure comprises 194 residues: Flavin prenyltransferase UbiX (194 aa).

FMN contacts are provided by residues 9–11, S35, 86–89, and R121; these read GAS and SIKT. Positions 151 and 167 each coordinate dimethylallyl phosphate.

It belongs to the UbiX/PAD1 family.

It carries out the reaction dimethylallyl phosphate + FMNH2 = prenylated FMNH2 + phosphate. In terms of biological role, involved in the carboxylation of phenylphosphate. Flavin prenyltransferase that catalyzes the synthesis of the prenylated FMN cofactor (prenyl-FMN) for 4-hydroxy-3-polyprenylbenzoic acid decarboxylase UbiD. The prenyltransferase is metal-independent and links a dimethylallyl moiety from dimethylallyl monophosphate (DMAP) to the flavin N5 and C6 atoms of FMN. This chain is Flavin prenyltransferase UbiX, found in Thauera aromatica.